A 576-amino-acid polypeptide reads, in one-letter code: Small ribosomal subunit protein mS80 (rPPR6) (576 aa).

The transit peptide at 1–76 directs the protein to the mitochondrion; the sequence is MLRSFLCRSQ…SLPADEIPIS (76 aa). PPR repeat units lie at residues 230 to 264, 265 to 299, 300 to 336, 341 to 370, 371 to 405, 406 to 440, 441 to 475, 476 to 510, and 511 to 546; these read NLEILNELIALFGKLGKSKAAFDVFSKTEEFGFTP, NAKTYYLTLEALCKRSFMDWACSVCEKMLKSGVLS, EGEQMGNIITWFCKEGKAEEAYSVYELAKTKEKSLPP, TLITALCKNDGTITFAQEMLGDLSGEARRR, GIKPFSDVIHSLCRMRNVKDAKALLLDMISKGPAP, GNAVFNLVVHACSKTGDLDEAKEVLKLMESRGLKP, DVYTYTVIISGYAKGGMMDEAQEILAEAKKKHKKL, SPVTYHALIRGYCKIEEYDEALKLLNEMDRFGVQP, and NADEYNKLIQSFCLKALDWEKAEVLFEEMKQKGLHL.

The protein belongs to the PPR family. P subfamily. In terms of assembly, component of the mitochondrial ribosome small subunit.

The protein resides in the mitochondrion. The sequence is that of Small ribosomal subunit protein mS80 (rPPR6) from Arabidopsis thaliana (Mouse-ear cress).